We begin with the raw amino-acid sequence, 152 residues long: Cornifin-A (152 aa).

The segment at 20–40 (EVKQPCQPPPQEPCAPKTKEP) is disordered. 14 tandem repeats follow at residues 27-34 (PPPQEPCA), 35-42 (PKTKEPCH), 43-49 (PIPEPCN), 50-57 (PKVPEPCQ), 58-65 (PKVPEPCQ), 66-73 (PKVPEPCQ), 74-81 (PKVPEPCQ), 82-89 (PKVPEPCQ), 90-97 (PKVPEPCQ), 98-105 (PKVPEPCH), 106-113 (PKAPEPCH), 114-121 (PVVPEPCQ), 122-129 (PVAPEPCQ), and 130-137 (PVVPEPCP). Residues 27-137 (PPPQEPCAPK…CQPVVPEPCP (111 aa)) form a 14 X 8 AA approximate tandem repeats region.

Belongs to the cornifin (SPRR) family. In terms of tissue distribution, in squamous epithelia lining the nasal vestibule and in the hard palate.

It is found in the cytoplasm. Its function is as follows. Cross-linked envelope protein of keratinocytes. It is a keratinocyte protein that first appears in the cell cytosol, but ultimately becomes cross-linked to membrane proteins by transglutaminase. All that results in the formation of an insoluble envelope beneath the plasma membrane. This chain is Cornifin-A (Sprr1a), found in Rattus norvegicus (Rat).